The following is a 198-amino-acid chain: Nucleoid occlusion factor SlmA (198 aa).

Positions 10–70 (NRREEILQSL…SLIEFIEDSL (61 aa)) constitute an HTH tetR-type domain. A DNA-binding region (H-T-H motif) is located at residues 33–52 (TTAKLAASVGVSEAALYRHF). Residues 117–145 (EQDKLQGRINQLFERIEAQLRQVLREKKM) are a coiled coil.

This sequence belongs to the nucleoid occlusion factor SlmA family. In terms of assembly, homodimer. Interacts with FtsZ.

Its subcellular location is the cytoplasm. The protein resides in the nucleoid. Its function is as follows. Required for nucleoid occlusion (NO) phenomenon, which prevents Z-ring formation and cell division over the nucleoid. Acts as a DNA-associated cell division inhibitor that binds simultaneously chromosomal DNA and FtsZ, and disrupts the assembly of FtsZ polymers. SlmA-DNA-binding sequences (SBS) are dispersed on non-Ter regions of the chromosome, preventing FtsZ polymerization at these regions. This Enterobacter sp. (strain 638) protein is Nucleoid occlusion factor SlmA.